Consider the following 561-residue polypeptide: Reductase FVEG_12641 (561 aa).

The interval 1 to 26 (MGVQSTANLPKETVSHLDTAPTPKPG) is disordered. The MOSC domain occupies 52–189 (QQHDGPVFCS…ICKGDTISLL (138 aa)). The region spanning 237 to 342 (SAPKTYTLVD…PGSNPGAMEN (106 aa)) is the FAD-binding FR-type domain. FMN-binding positions include 288-289 (FE), 305-307 (GVS), 313-316 (RGGS), and threonine 362. The 2Fe-2S ferredoxin-type domain maps to 474 to 561 (FEVEVDEPDS…GIGRLRIEID (88 aa)). Cysteine 512 is a [2Fe-2S] cluster binding site. Serine 514 lines the FMN pocket. [2Fe-2S] cluster contacts are provided by cysteine 517, cysteine 520, and cysteine 548.

This sequence belongs to the PDR/VanB family. In terms of assembly, monomer. The cofactor is FMN.

Its function is as follows. Reductase; part of the Fusarium detoxification of benzoxazolinone cluster 2 (FDB2) involved in the degradation of benzoxazolinones produced by the host plant. Maize, wheat, and rye produce the 2 benzoxazinone phytoanticipins 2,4-dihy-droxy-7-methoxy-1,4-benzoxazin-3-one (DIMBOA) and 2,4-dihydroxy-1,4-benzoxazin-3-one (DIBOA) that, due to their inherent instability once released, spontaneously degrade to the more stable corresponding benzoxazolinones, 6-methoxy-2-benzoxazolinone (MBOA) and 2-benzoxazolinone (BOA), respectively. The first step in the detoxification of benzoxazolinones involves the hydrolysis of the cyclic ester bond of benzoxazolinones by the FDB1 cluster gamma-lactamase MBL1 to aminophenols. MBL1 is able to convert BOA into 2-aminophenol (2-AP), as well as MBOA into 5-methoxy-2-aminophenol (2-AMP). The FDB2 cluster N-malonyltransferase FDB2/NAT1 then metabolizes aminophenols via N-malonylation to non-toxic malonamic acids. FDB2/NAT1 converts 2-AP into N-(2-hydroxyphenyl) malonamic acid (HPMA) and 2-AMP into N-(2-hydroxy-4-methoxyphenyl) malonamic acid (HMPMA). The duplicated dienlactone hydrolases DLH1 and DLH2 may provide redundant function for hydrolyzing the lactone moiety in the BOA molecule. The roles of the amidases an other enzymes encoded by the 2 FDB clusters have not been identified so far. This Gibberella moniliformis (strain M3125 / FGSC 7600) (Maize ear and stalk rot fungus) protein is Reductase FVEG_12641.